Consider the following 199-residue polypeptide: Adenylate kinase (199 aa).

8-13 (GAGKGT) lines the ATP pocket. Positions 28–57 (STGDIFRANIKNKTELGQQVKAIVDAGDYV) are NMP. AMP contacts are provided by residues threonine 29, arginine 34, 55-57 (DYV), 83-86 (GYPR), and glutamine 90. The interval 124–134 (KRAREQGRADD) is LID. Arginine 125 is a binding site for ATP. Positions 131 and 142 each coordinate AMP. Glycine 170 contacts ATP.

The protein belongs to the adenylate kinase family. Monomer.

Its subcellular location is the cytoplasm. The catalysed reaction is AMP + ATP = 2 ADP. The protein operates within purine metabolism; AMP biosynthesis via salvage pathway; AMP from ADP: step 1/1. Functionally, catalyzes the reversible transfer of the terminal phosphate group between ATP and AMP. Plays an important role in cellular energy homeostasis and in adenine nucleotide metabolism. The sequence is that of Adenylate kinase from Leifsonia xyli subsp. xyli (strain CTCB07).